Reading from the N-terminus, the 398-residue chain is MAGIKIQEDACLVCNACSKACPTEAIEIAPFKTCTLCFSCASACPTGALVENNGKLIYNSSKCIKCGNCATACPTGIKKVDDRFPYSKGHCVLCEKCVDACPIDIISIPGKIDKPEREVTIPQEPIKVTEACVGCSECVPVCPVDAISIEDELAVIDTEKCIYCSVCAQTCPWNAIYVAGKKPSKRQKEIKSFTVTEECIGCEKCVEVCPGDMITYNREDLIVKLPEACPACHLCEQNCPVDAISLEVEYGSAKPVTEEGLVWYEDKCNYCGPCAIKCPLCPTNAINMINQKGLALPSRTKTDKDPEFRMCIRCGACVMKCPTGALKMGKITHEGKEYNRIEFSPALCNECGECVDVCPQDTLKLTGDEKKPLEGYCILCLKCIEACAKTKRNALGLQ.

4Fe-4S ferredoxin-type domains lie at 2-31, 25-53, 54-83, 82-111, 123-152, 152-181, 191-219, 220-249, 259-291, 300-331, and 339-368; these read AGIK…IAPF, AIEI…VENN, GKLI…VDDR, DRFP…IPGK, QEPI…IEDE, ELAV…VAGK, KSFT…YNRE, DLIV…LEVE, EGLV…MINQ, TKTD…MGKI, and NRIE…LTGD. The [4Fe-4S] cluster site is built by Cys11, Cys14, Cys17, Cys21, Cys34, Cys37, Cys40, Cys44, Cys63, Cys66, Cys69, Cys73, Cys91, Cys94, Cys97, Cys101, Cys132, Cys135, Cys138, Cys142, Cys161, Cys164, Cys167, Cys171, Cys199, Cys202, Cys205, Cys209, Cys229, Cys232, Cys235, Cys239, Cys268, Cys271, Cys274, Cys278, Cys311, Cys314, Cys317, Cys321, Cys348, Cys351, Cys354, Cys358, Cys377, Cys380, Cys383, and Cys387.

Requires [4Fe-4S] cluster as cofactor.

In Methanococcus voltae, this protein is Polyferredoxin protein VhuB (vhuB).